Here is a 694-residue protein sequence, read N- to C-terminus: Type VI secretion system spike protein VgrG2 (694 aa).

Belongs to the VgrG protein family.

It localises to the secreted. Part of the type VI secretion system specialized secretion system, which delivers several virulence factors in both prokaryotic and eukaryotic cells during infection. Forms the spike at the tip of the elongating tube formed by haemolysin co-regulated protein Hcp. Allows the delivery of the VasX antibacterial toxin to target cells where it exerts its toxicity. The sequence is that of Type VI secretion system spike protein VgrG2 (vgrG2) from Vibrio cholerae serotype O1 (strain ATCC 39315 / El Tor Inaba N16961).